Consider the following 166-residue polypeptide: Ubiquitin-fold modifier-conjugating enzyme 1 (166 aa).

The active-site Glycyl thioester intermediate is the cysteine 116.

This sequence belongs to the ubiquitin-conjugating enzyme family. UFC1 subfamily.

E2-like enzyme which forms an intermediate with UFM1 via a thioester linkage. This chain is Ubiquitin-fold modifier-conjugating enzyme 1, found in Monosiga brevicollis (Choanoflagellate).